The sequence spans 643 residues: MIKVSLKDGSVKEFEAGLSVYEIAKSISEGLARNACCGVVNGKVCDLRNKINEDVSLSICTFDSQEGKDAVRHSISHVLAYAVKRLFPQTKLAIGPSIATGFYYDFDKDVAFSAQDLEKLEAEMKKIIKENPSIEKFELPRDEALELMKDEPYKVELINDLGEDEIISFYKIGEFTDLCAGPHVMSLKPIKALKLTRSAGAYWKGDEKNKMLTRIYGTAFLKKSELDEYLEAIEEAKKRDHNKLGRELKLFTTDENVGQGLPLLMPKGAKIVQTLQRWVEDEEERRGYVLTKTPLMAKSDLYKISGHWDHYKDGMFVLGDEEKDEEVFALRPMTCPFQYTIYNAEQHSYRDLPIRYGETSTLFRNESSGEMHGLIRVRQFTLADGHLIVTPEQLEEEFKGVLELIQYLMKTLGIDEDISYRFSKWDPNNTEKYINDPEAWNKTQDTMRTILDHLKINYVEADDEAAFYGPKLDLQCRNVHGKEDTLFTVQIDFALAERFDMSYIDKNGEKKRPYIIHRSSIGCYERTLAMLIEKYAGAFPTWLSPVQVKVLPISDKYNDYAESVVKSLRNKGVRIEADYRAEKIGYKIREARLERTPYILVVGEKEAANNEVSVRSRKNDDEGAIKLDAFTERLLNEIATKER.

Residues 1–61 (MIKVSLKDGS…NEDVSLSICT (61 aa)) form the TGS domain. The tract at residues 240-540 (DHNKLGRELK…LIEKYAGAFP (301 aa)) is catalytic. Positions 335, 386, and 517 each coordinate Zn(2+).

This sequence belongs to the class-II aminoacyl-tRNA synthetase family. As to quaternary structure, homodimer. The cofactor is Zn(2+).

It is found in the cytoplasm. The catalysed reaction is tRNA(Thr) + L-threonine + ATP = L-threonyl-tRNA(Thr) + AMP + diphosphate + H(+). Functionally, catalyzes the attachment of threonine to tRNA(Thr) in a two-step reaction: L-threonine is first activated by ATP to form Thr-AMP and then transferred to the acceptor end of tRNA(Thr). Also edits incorrectly charged L-seryl-tRNA(Thr). This Clostridium botulinum (strain Alaska E43 / Type E3) protein is Threonine--tRNA ligase.